Here is a 402-residue protein sequence, read N- to C-terminus: uncharacterized protein (402 aa).

This sequence belongs to the peptidase M20 family.

This is an uncharacterized protein from Sinorhizobium fredii (strain NBRC 101917 / NGR234).